Consider the following 411-residue polypeptide: Putative odorant receptor 59c (411 aa).

Residues 1–46 lie on the Cytoplasmic side of the membrane; that stretch reads MTKFFFKRLQTAPLDQEVSSLDASDYYYRIAFFLGWTPPKGALLRW. The chain crosses the membrane as a helical span at residues 47–67; that stretch reads IYSLWTLTTMWLGIVYLPLGL. Residues 68–86 lie on the Extracellular side of the membrane; that stretch reads SLTYVKHFDRFTPTEFLTS. Residues 87–107 form a helical membrane-spanning segment; sequence LQVDINCIGNVIKSCVTYSQM. The Cytoplasmic segment spans residues 108–139; the sequence is WRFRRMNELISSLDKRCVTTTQRRIFHKMVAR. The chain crosses the membrane as a helical span at residues 140–160; the sequence is VNLIVILFLSTYLGFCFLTLF. Topologically, residues 161–185 are extracellular; sequence TSVFAGKAPWQLYNPLVDWRKGHWQ. The helical transmembrane segment at 186–206 threads the bilayer; sequence LWIASILEYCVVSIGTMQELM. Topologically, residues 207–271 are cytoplasmic; the sequence is SDTYAIVFIS…QIIRPILSIT (65 aa). The chain crosses the membrane as a helical span at residues 272-292; sequence IFAQFMLVGIDLGLAAISILF. Residues 293–296 are Extracellular-facing; the sequence is FPNT. Residues 297 to 317 form a helical membrane-spanning segment; sequence IWTIMANVSFIVAICTESFPC. At 318–369 the chain is on the cytoplasmic side; the sequence is CMLCEHLIEDSVHVSNALFHSNWITADRSYKSAVLYFLHRAQQPIQFTAGSI. The helical transmembrane segment at 370–390 threads the bilayer; sequence FPISVQSNIAVAKFAFTIITI. Residues 391-411 lie on the Extracellular side of the membrane; sequence VNQMNLGEKFFSDRSNGDINP.

It belongs to the insect chemoreceptor superfamily. Heteromeric odorant receptor channel (TC 1.A.69) family. Or2a subfamily. Interacts with Orco. Complexes exist early in the endomembrane system in olfactory sensory neurons (OSNs), coupling these complexes to the conserved ciliary trafficking pathway. Expressed in olfactory sensory neurons in the maxillary palp.

Its subcellular location is the cell membrane. Functionally, odorant receptor which mediates acceptance or avoidance behavior, depending on its substrates. The odorant receptor repertoire encodes a large collection of odor stimuli that vary widely in identity, intensity, and duration. May form a complex with Orco to form odorant-sensing units, providing sensitive and prolonged odorant signaling and calcium permeability. This Drosophila melanogaster (Fruit fly) protein is Putative odorant receptor 59c (Or59c).